The primary structure comprises 148 residues: Cystatin-D (148 aa).

The N-terminal stretch at 1–33 (MASLLSPSMPVLAAVALTLTLAVIPEASTNAEA) is a signal peptide. Residues 36–148 (VVLGGVEPAD…SMTNFNCYNF (113 aa)) form the Cystatin kininogen-type domain. 2 disulfides stabilise this stretch: cysteine 101/cysteine 111 and cysteine 125/cysteine 145.

The protein belongs to the cystatin family. In terms of tissue distribution, in cartilage, expressed mainly in mature chondrocytes including prehypertrophic and hypertrophic cells (at protein level). Expressed exclusively in cartilage.

The protein resides in the cytoplasm. It localises to the cytosol. May play a role in the last steps of the chondrocyte differentiation pathway as an inducer of maturation. Induces chondrocyte calcification during endochondral ossification by playing a role in the transcriptional inhibition of ENPP1, a generator of pyrophosphate which inhibits calcification. Possibly impairs the binding of a transcription factor to the ENPP1 promoter. Unlike other cystatins, does not have thiol protease inhibitor activity. This chain is Cystatin-D, found in Mus musculus (Mouse).